The primary structure comprises 95 residues: Neutrophil antibiotic peptide NP-4 (95 aa).

The first 19 residues, 1–19, serve as a signal peptide directing secretion; sequence MRTLALLAAILLVTLQAQA. The propeptide occupies 20–62; sequence ELHSGMADDGVDQQQPRAQDLDVAVYIKQDETSPLEVLGAKAG. 3 disulfide bridges follow: C65-C93, C67-C82, and C72-C92.

The protein belongs to the alpha-defensin family.

The protein localises to the secreted. Its function is as follows. Microbicidal activity. In Oryctolagus cuniculus (Rabbit), this protein is Neutrophil antibiotic peptide NP-4.